The following is a 407-amino-acid chain: Arginine deiminase (407 aa).

Catalysis depends on C397, which acts as the Amidino-cysteine intermediate.

This sequence belongs to the arginine deiminase family.

The protein resides in the cytoplasm. The enzyme catalyses L-arginine + H2O = L-citrulline + NH4(+). It functions in the pathway amino-acid degradation; L-arginine degradation via ADI pathway; carbamoyl phosphate from L-arginine: step 1/2. The sequence is that of Arginine deiminase from Salmonella arizonae (strain ATCC BAA-731 / CDC346-86 / RSK2980).